The primary structure comprises 356 residues: L-Ala-D/L-Glu epimerase (356 aa).

Residue 161-163 (KVK) coordinates substrate. Mg(2+)-binding residues include aspartate 191, glutamate 219, and aspartate 244. Residues lysine 268 and 320–322 (DLD) contribute to the substrate site.

This sequence belongs to the mandelate racemase/muconate lactonizing enzyme family. Mg(2+) serves as cofactor.

The catalysed reaction is L-alanyl-L-glutamate = L-alanyl-D-glutamate. In terms of biological role, dipeptide epimerase with a preference for substrates containing a Glu residue in the second position. Catalyzes the epimerization of L-Ala-L-Glu, L-Ser-L-Glu, L-Thr-L-Glu, L-Val-L-Glu, L-Gly-L-Glu and L-Thr-L-Glu (in vitro). May play a role in the metabolism of the murein peptide, of which L-Ala-D-Glu is a component. This is L-Ala-D/L-Glu epimerase from Francisella tularensis subsp. novicida (strain U112).